The primary structure comprises 504 residues: Phosphoenolpyruvate carboxylase (504 aa).

Positions 1-16 are enriched in polar residues; that stretch reads MTSRKIPSIMGTQHPD. The disordered stretch occupies residues 1–21; sequence MTSRKIPSIMGTQHPDNANAP.

This sequence belongs to the PEPCase type 2 family. Homotetramer. Mg(2+) is required as a cofactor.

The catalysed reaction is oxaloacetate + phosphate = phosphoenolpyruvate + hydrogencarbonate. Functionally, catalyzes the irreversible beta-carboxylation of phosphoenolpyruvate (PEP) to form oxaloacetate (OAA), a four-carbon dicarboxylic acid source for the tricarboxylic acid cycle. This chain is Phosphoenolpyruvate carboxylase, found in Leuconostoc mesenteroides subsp. mesenteroides (strain ATCC 8293 / DSM 20343 / BCRC 11652 / CCM 1803 / JCM 6124 / NCDO 523 / NBRC 100496 / NCIMB 8023 / NCTC 12954 / NRRL B-1118 / 37Y).